Consider the following 118-residue polypeptide: Neutral phospholipase A2 homolog taipoxin beta chain 2 (118 aa).

Intrachain disulfides connect cysteine 11–cysteine 71, cysteine 27–cysteine 117, cysteine 29–cysteine 45, cysteine 44–cysteine 98, cysteine 51–cysteine 91, cysteine 60–cysteine 84, and cysteine 78–cysteine 89.

This sequence belongs to the phospholipase A2 family. Group I subfamily. D49 sub-subfamily. Heterotrimer of alpha, beta, and gamma chains; non-covalently linked. Expressed by the venom gland.

Its subcellular location is the secreted. Functionally, heterotrimer: Snake venom phospholipase A2 (PLA2) heterotrimer that acts as a potent presynaptic neurotoxin by blocking synaptic transmission and synaptic vesicle recycling. May act by binding in a calcium-dependent fashion to neurotonal pentraxin-1 (NPTX1) and neurotonal pentraxin-2 (NPTX2), but not to neuronal pentraxin receptor (NPTXR). Also binds to taipoxin-associated calcium binding protein 49 (RCN2), a protein localized in the lumen of endoplasmic reticulum. Its function is as follows. Monomer (beta chain): Snake venom phospholipase A2 homolog that is neither toxic nor enzymatically active. Does not bind calcium. In Oxyuranus scutellatus scutellatus (Australian taipan), this protein is Neutral phospholipase A2 homolog taipoxin beta chain 2.